We begin with the raw amino-acid sequence, 364 residues long: Chorismate synthase (364 aa).

2 residues coordinate NADP(+): arginine 48 and arginine 54. FMN is bound by residues 125-127 (RSS), 238-239 (NA), glycine 278, 293-297 (KPTSS), and arginine 319.

The protein belongs to the chorismate synthase family. As to quaternary structure, homotetramer. Requires FMNH2 as cofactor.

The enzyme catalyses 5-O-(1-carboxyvinyl)-3-phosphoshikimate = chorismate + phosphate. It functions in the pathway metabolic intermediate biosynthesis; chorismate biosynthesis; chorismate from D-erythrose 4-phosphate and phosphoenolpyruvate: step 7/7. Its function is as follows. Catalyzes the anti-1,4-elimination of the C-3 phosphate and the C-6 proR hydrogen from 5-enolpyruvylshikimate-3-phosphate (EPSP) to yield chorismate, which is the branch point compound that serves as the starting substrate for the three terminal pathways of aromatic amino acid biosynthesis. This reaction introduces a second double bond into the aromatic ring system. The protein is Chorismate synthase of Marinobacter nauticus (strain ATCC 700491 / DSM 11845 / VT8) (Marinobacter aquaeolei).